The primary structure comprises 163 residues: Crossover junction endodeoxyribonuclease RuvC (163 aa).

Catalysis depends on residues D4, E65, and D138. Mg(2+) contacts are provided by D4, E65, and D138.

It belongs to the RuvC family. Homodimer which binds Holliday junction (HJ) DNA. The HJ becomes 2-fold symmetrical on binding to RuvC with unstacked arms; it has a different conformation from HJ DNA in complex with RuvA. In the full resolvosome a probable DNA-RuvA(4)-RuvB(12)-RuvC(2) complex forms which resolves the HJ. Mg(2+) serves as cofactor.

Its subcellular location is the cytoplasm. It carries out the reaction Endonucleolytic cleavage at a junction such as a reciprocal single-stranded crossover between two homologous DNA duplexes (Holliday junction).. In terms of biological role, the RuvA-RuvB-RuvC complex processes Holliday junction (HJ) DNA during genetic recombination and DNA repair. Endonuclease that resolves HJ intermediates. Cleaves cruciform DNA by making single-stranded nicks across the HJ at symmetrical positions within the homologous arms, yielding a 5'-phosphate and a 3'-hydroxyl group; requires a central core of homology in the junction. The consensus cleavage sequence is 5'-(A/T)TT(C/G)-3'. Cleavage occurs on the 3'-side of the TT dinucleotide at the point of strand exchange. HJ branch migration catalyzed by RuvA-RuvB allows RuvC to scan DNA until it finds its consensus sequence, where it cleaves and resolves the cruciform DNA. This Corynebacterium jeikeium (strain K411) protein is Crossover junction endodeoxyribonuclease RuvC.